Consider the following 621-residue polypeptide: uncharacterized protein (621 aa).

5 positions are modified to phosphoserine: Ser-269, Ser-271, Ser-274, Ser-290, and Ser-292. 6 LRR repeats span residues Gln-333–Ser-354, Ser-357–Pro-379, Gln-380–Ser-401, His-404–Pro-425, Ser-426–Val-447, and Asn-451–Thr-472. The interval Ser-552–Ser-581 is disordered.

The protein resides in the cytoplasm. The protein localises to the nucleus. It is found in the vacuole membrane. This is an uncharacterized protein from Schizosaccharomyces pombe (strain 972 / ATCC 24843) (Fission yeast).